Consider the following 196-residue polypeptide: Holliday junction branch migration complex subunit RuvA (196 aa).

The segment at 1–63 is domain I; sequence MIEYIKGEIV…EDAHLLFGFA (63 aa). Residues 64–142 form a domain II region; sequence EKIERELFLL…PMESMAGNLP (79 aa). The tract at residues 142–146 is flexible linker; it reads PEASV. The domain III stretch occupies residues 147–196; it reads SNGAVTEEAVAALVMLGFQKAASQKAVSAILKGSPTLAVEQVIKTALRML.

Belongs to the RuvA family. Homotetramer. Forms an RuvA(8)-RuvB(12)-Holliday junction (HJ) complex. HJ DNA is sandwiched between 2 RuvA tetramers; dsDNA enters through RuvA and exits via RuvB. An RuvB hexamer assembles on each DNA strand where it exits the tetramer. Each RuvB hexamer is contacted by two RuvA subunits (via domain III) on 2 adjacent RuvB subunits; this complex drives branch migration. In the full resolvosome a probable DNA-RuvA(4)-RuvB(12)-RuvC(2) complex forms which resolves the HJ.

It is found in the cytoplasm. The RuvA-RuvB-RuvC complex processes Holliday junction (HJ) DNA during genetic recombination and DNA repair, while the RuvA-RuvB complex plays an important role in the rescue of blocked DNA replication forks via replication fork reversal (RFR). RuvA specifically binds to HJ cruciform DNA, conferring on it an open structure. The RuvB hexamer acts as an ATP-dependent pump, pulling dsDNA into and through the RuvAB complex. HJ branch migration allows RuvC to scan DNA until it finds its consensus sequence, where it cleaves and resolves the cruciform DNA. This chain is Holliday junction branch migration complex subunit RuvA, found in Parabacteroides distasonis (strain ATCC 8503 / DSM 20701 / CIP 104284 / JCM 5825 / NCTC 11152).